We begin with the raw amino-acid sequence, 466 residues long: Muscarinic acetylcholine receptor M2 (466 aa).

Residues M1 to E22 are Extracellular-facing. Residues N2, N3, and N6 are each glycosylated (N-linked (GlcNAc...) asparagine). A helical transmembrane segment spans residues V23–M45. The Cytoplasmic portion of the chain corresponds to V46 to N59. A helical transmembrane segment spans residues Y60 to Y80. Over T81–D97 the chain is Extracellular. A disulfide bond links C96 and C176. The helical transmembrane segment at L98–F119 threads the bilayer. Residues D120–Y122 carry the Important for signaling motif. The Cytoplasmic portion of the chain corresponds to D120–M139. The helical transmembrane segment at A140–W162 threads the bilayer. Over Q163–A184 the chain is Extracellular. A helical membrane pass occupies residues A185–I209. Over S210 to R387 the chain is Cytoplasmic. A disordered region spans residues K218–S320. Position 232 is a phosphoserine (S232). Basic and acidic residues predominate over residues G254–G270. Composition is skewed to polar residues over residues N284–A293 and D304–G313. A helical membrane pass occupies residues T388 to N410. Over T411–P418 the chain is Extracellular. Cysteines 413 and 416 form a disulfide. A helical transmembrane segment spans residues N419–L442. An Important for signaling motif is present at residues N436–Y440. At C443–R466 the chain is on the cytoplasmic side. Residues T446, T450, and T465 each carry the phosphothreonine modification.

The protein belongs to the G-protein coupled receptor 1 family. Muscarinic acetylcholine receptor subfamily. CHRM2 sub-subfamily. As to quaternary structure, interacts with ARRB1 and ARRB2. Interacts with RACK1; the interaction regulates CHRM2 internalization. Phosphorylated in response to agonist treatment.

It localises to the cell membrane. The protein resides in the postsynaptic cell membrane. Its function is as follows. The muscarinic acetylcholine receptor mediates various cellular responses, including inhibition of adenylate cyclase, breakdown of phosphoinositides and modulation of potassium channels through the action of G proteins. Primary transducing effect is adenylate cyclase inhibition. Signaling promotes phospholipase C activity, leading to the release of inositol trisphosphate (IP3); this then triggers calcium ion release into the cytosol. In Mus musculus (Mouse), this protein is Muscarinic acetylcholine receptor M2 (Chrm2).